A 488-amino-acid chain; its full sequence is Probable malate:quinone oxidoreductase (488 aa).

This sequence belongs to the MQO family. FAD serves as cofactor.

The enzyme catalyses (S)-malate + a quinone = a quinol + oxaloacetate. It participates in carbohydrate metabolism; tricarboxylic acid cycle; oxaloacetate from (S)-malate (quinone route): step 1/1. This is Probable malate:quinone oxidoreductase from Neisseria meningitidis serogroup C (strain 053442).